The primary structure comprises 91 residues: Acylphosphatase (91 aa).

In terms of domain architecture, Acylphosphatase-like spans 5-91; that stretch reads RAHLRIYGRV…EGLEGFKVVG (87 aa). Active-site residues include R20 and N38.

Belongs to the acylphosphatase family.

The enzyme catalyses an acyl phosphate + H2O = a carboxylate + phosphate + H(+). This is Acylphosphatase (acyP) from Thermococcus kodakarensis (strain ATCC BAA-918 / JCM 12380 / KOD1) (Pyrococcus kodakaraensis (strain KOD1)).